We begin with the raw amino-acid sequence, 1013 residues long: RNA-binding protein 44 (1013 aa).

2 disordered regions span residues 1 to 25 (MQAT…FQND) and 56 to 94 (LATE…IFSQ). Residues 56 to 76 (LATEERASDKENSIVDQRDLS) show a composition bias toward basic and acidic residues. Over residues 78–94 (LSFSENQDSNRGNIFSQ) the composition is skewed to polar residues. Phosphoserine is present on residues S365, S368, S510, S681, and S688. In terms of domain architecture, RRM spans 792 to 865 (FLIHVGGLCP…KSVTVRLVKI (74 aa)). Residues 905–925 (RAKSRQLESEQDSEFPPLDQG) form a disordered region.

As to quaternary structure, homodimer. Interacts with TEX14. In terms of tissue distribution, highly expressed in testis. Also expressed in other tissues at lower level.

It localises to the cytoplasm. In terms of biological role, component of intercellular bridges during meiosis. Intercellular bridges are evolutionarily conserved structures that connect differentiating germ cells. Not required for fertility. This Mus musculus (Mouse) protein is RNA-binding protein 44 (Rbm44).